The chain runs to 284 residues: Acetylglutamate kinase (284 aa).

Substrate-binding positions include Gly64–Gly65, Arg86, and Asn181.

This sequence belongs to the acetylglutamate kinase family. ArgB subfamily.

The protein resides in the cytoplasm. It catalyses the reaction N-acetyl-L-glutamate + ATP = N-acetyl-L-glutamyl 5-phosphate + ADP. Its pathway is amino-acid biosynthesis; L-arginine biosynthesis; N(2)-acetyl-L-ornithine from L-glutamate: step 2/4. Catalyzes the ATP-dependent phosphorylation of N-acetyl-L-glutamate. The protein is Acetylglutamate kinase of Nitratiruptor sp. (strain SB155-2).